The chain runs to 576 residues: Colicin-E7 (576 aa).

Disordered regions lie at residues 1–75, 421–478, and 506–557; these read MSGG…GGGS, SSAL…PVPD, and DPEL…GVYD. Gly residues predominate over residues 19-35; it reads NINGGPTGLGGNGGASD. The segment covering 36–45 has biased composition (low complexity); that stretch reads GSGWSSENNP. Residues 46–75 show a composition bias toward gly residues; it reads WGGGSGSGVHWGGGSGHGNGGGNSNSGGGS. 2 stretches are compositionally biased toward basic and acidic residues: residues 424-447 and 535-548; these read LERRKQKENKEKDAKAKLDKESKR and SGKRTSFELHHEKP. The Zn(2+) site is built by His-544, His-569, and His-573.

Belongs to the colicin/pyosin nuclease family.

Its function is as follows. This plasmid-coded bactericidal protein is an endonuclease active on both single- and double-stranded DNA but with undefined specificity. Colicins are polypeptide toxins produced by and active against E.coli and closely related bacteria. The chain is Colicin-E7 (colE7) from Escherichia coli.